We begin with the raw amino-acid sequence, 901 residues long: Protein translocase subunit SecA (901 aa).

ATP is bound by residues Q87, 105–109 (GEGKT), and D512. A disordered region spans residues 852-901 (AQMQQLSHQSDDEAAAEDLAAQTGERKVGRNDPCPCGSGKKYKQCHGRLS). C885, C887, C896, and H897 together coordinate Zn(2+). The span at 891 to 901 (KKYKQCHGRLS) shows a compositional bias: basic residues.

Belongs to the SecA family. As to quaternary structure, monomer and homodimer. Part of the essential Sec protein translocation apparatus which comprises SecA, SecYEG and auxiliary proteins SecDF-YajC and YidC. Zn(2+) serves as cofactor.

Its subcellular location is the cell inner membrane. The protein localises to the cytoplasm. The catalysed reaction is ATP + H2O + cellular proteinSide 1 = ADP + phosphate + cellular proteinSide 2.. Its function is as follows. Part of the Sec protein translocase complex. Interacts with the SecYEG preprotein conducting channel. Has a central role in coupling the hydrolysis of ATP to the transfer of proteins into and across the cell membrane, serving both as a receptor for the preprotein-SecB complex and as an ATP-driven molecular motor driving the stepwise translocation of polypeptide chains across the membrane. In Klebsiella pneumoniae (strain 342), this protein is Protein translocase subunit SecA.